We begin with the raw amino-acid sequence, 876 residues long: Alanine--tRNA ligase (876 aa).

His-565, His-569, Cys-667, and His-671 together coordinate Zn(2+).

It belongs to the class-II aminoacyl-tRNA synthetase family. It depends on Zn(2+) as a cofactor.

The protein resides in the cytoplasm. The catalysed reaction is tRNA(Ala) + L-alanine + ATP = L-alanyl-tRNA(Ala) + AMP + diphosphate. Its function is as follows. Catalyzes the attachment of alanine to tRNA(Ala) in a two-step reaction: alanine is first activated by ATP to form Ala-AMP and then transferred to the acceptor end of tRNA(Ala). Also edits incorrectly charged Ser-tRNA(Ala) and Gly-tRNA(Ala) via its editing domain. The sequence is that of Alanine--tRNA ligase from Staphylococcus aureus (strain MSSA476).